A 439-amino-acid chain; its full sequence is MQAYFEQIEKVRYEGSQSSNPFAFRHYNPDQEILGKRMADHLRFAVAYWHTFCWNGSDMFGVGSFARPWQQSGDALELAKRKADIAFEFFQKLSVPYYCFHDVDVAPEGNSLKEYLHNIAVITDVLAEKQQDSGVKLLWGTANCFTNPRYGAGAATNPDPDVFAWAATQVFTAMNATKTLGGENYVLWGGREGYETLLNTDLRQEREQIGRFMQMVVEHKHKIGFQGTLLIEPKPQEPTKHQYDYDVATVYGFLKQFGLEKEIKVNVEANHATLAGHSFHHEIATAVALGVFGSVDANRGDPQLGWDTDQFPNSVEENTLIMYEILKAGGFTTGGLNFDAKVRRQSTDRYDLFHAHIGAMDTMALALKAAARMIEDDKLNQLVAKRYAGWNGELGQQILQGNASLESLAQYAESHQLAPQHQSGQQELLENLVNRHLFG.

Catalysis depends on residues H101 and D104. 7 residues coordinate Mg(2+): E232, E268, H271, D296, D307, D309, and D339.

It belongs to the xylose isomerase family. Homotetramer. It depends on Mg(2+) as a cofactor.

It is found in the cytoplasm. The catalysed reaction is alpha-D-xylose = alpha-D-xylulofuranose. The protein is Xylose isomerase of Pectobacterium atrosepticum (strain SCRI 1043 / ATCC BAA-672) (Erwinia carotovora subsp. atroseptica).